A 291-amino-acid chain; its full sequence is Glycine--tRNA ligase alpha subunit (291 aa).

The protein belongs to the class-II aminoacyl-tRNA synthetase family. As to quaternary structure, tetramer of two alpha and two beta subunits.

Its subcellular location is the cytoplasm. It catalyses the reaction tRNA(Gly) + glycine + ATP = glycyl-tRNA(Gly) + AMP + diphosphate. This chain is Glycine--tRNA ligase alpha subunit, found in Geotalea uraniireducens (strain Rf4) (Geobacter uraniireducens).